Consider the following 128-residue polypeptide: Iron-sulfur cluster insertion protein ErpA (128 aa).

Positions 56, 120, and 122 each coordinate iron-sulfur cluster.

It belongs to the HesB/IscA family. As to quaternary structure, homodimer. It depends on iron-sulfur cluster as a cofactor.

Required for insertion of 4Fe-4S clusters for at least IspG. The chain is Iron-sulfur cluster insertion protein ErpA from Xanthomonas axonopodis pv. citri (strain 306).